Here is a 502-residue protein sequence, read N- to C-terminus: Chromosomal replication initiator protein DnaA (502 aa).

Residues 1–112 (MADDLSLGFT…PSTDHIDDNS (112 aa)) are domain I, interacts with DnaA modulators. The tract at residues 113–161 (SSADVLLTDDCGTDTDENYGEPLTGEYQGLPTYFTERPHHTESTVTGGT) is domain II. The domain III, AAA+ region stretch occupies residues 162-378 (SLNRRYTFET…GALIRVTAFA (217 aa)). Residues glycine 206, glycine 208, lysine 209, and threonine 210 each coordinate ATP. The segment at 379 to 502 (SLNKTAIDKA…TTRIRQRSKR (124 aa)) is domain IV, binds dsDNA.

This sequence belongs to the DnaA family. In terms of assembly, oligomerizes as a right-handed, spiral filament on DNA at oriC.

It is found in the cytoplasm. Its function is as follows. Plays an essential role in the initiation and regulation of chromosomal replication. ATP-DnaA binds to the origin of replication (oriC) to initiate formation of the DNA replication initiation complex once per cell cycle. Binds the DnaA box (a 9 base pair repeat at the origin) and separates the double-stranded (ds)DNA. Forms a right-handed helical filament on oriC DNA; dsDNA binds to the exterior of the filament while single-stranded (ss)DNA is stabiized in the filament's interior. The ATP-DnaA-oriC complex binds and stabilizes one strand of the AT-rich DNA unwinding element (DUE), permitting loading of DNA polymerase. After initiation quickly degrades to an ADP-DnaA complex that is not apt for DNA replication. Binds acidic phospholipids. In Mycobacterium leprae (strain TN), this protein is Chromosomal replication initiator protein DnaA.